We begin with the raw amino-acid sequence, 354 residues long: DNA polymerase IV (354 aa).

A UmuC domain is found at 6–187; that stretch reads IIHVDCDCFY…LPVARLHGVG (182 aa). 2 residues coordinate Mg(2+): aspartate 10 and aspartate 105. Glutamate 106 is a catalytic residue.

Belongs to the DNA polymerase type-Y family. As to quaternary structure, monomer. Mg(2+) is required as a cofactor.

Its subcellular location is the cytoplasm. It carries out the reaction DNA(n) + a 2'-deoxyribonucleoside 5'-triphosphate = DNA(n+1) + diphosphate. Functionally, poorly processive, error-prone DNA polymerase involved in untargeted mutagenesis. Copies undamaged DNA at stalled replication forks, which arise in vivo from mismatched or misaligned primer ends. These misaligned primers can be extended by PolIV. Exhibits no 3'-5' exonuclease (proofreading) activity. May be involved in translesional synthesis, in conjunction with the beta clamp from PolIII. The polypeptide is DNA polymerase IV (Pseudomonas putida (strain ATCC 47054 / DSM 6125 / CFBP 8728 / NCIMB 11950 / KT2440)).